The chain runs to 98 residues: NADH-ubiquinone oxidoreductase chain 4L (98 aa).

3 consecutive transmembrane segments (helical) span residues 1–21 (MTLI…GLLM), 29–49 (ALLC…LTIL), and 61–81 (IILL…LVMV).

This sequence belongs to the complex I subunit 4L family. Core subunit of respiratory chain NADH dehydrogenase (Complex I) which is composed of 45 different subunits.

It is found in the mitochondrion inner membrane. The enzyme catalyses a ubiquinone + NADH + 5 H(+)(in) = a ubiquinol + NAD(+) + 4 H(+)(out). In terms of biological role, core subunit of the mitochondrial membrane respiratory chain NADH dehydrogenase (Complex I) which catalyzes electron transfer from NADH through the respiratory chain, using ubiquinone as an electron acceptor. Part of the enzyme membrane arm which is embedded in the lipid bilayer and involved in proton translocation. The protein is NADH-ubiquinone oxidoreductase chain 4L (MT-ND4L) of Balaenoptera bonaerensis (Antarctic minke whale).